The chain runs to 832 residues: Serine/threonine-protein kinase Doa (832 aa).

4 disordered regions span residues 1-86 (MVAA…SKYI), 135-158 (LLQHQQQQHHQQQQQQHQEQQQYP), 179-215 (SDPFMQQQHMPAHQQQQHLPHKLQQSYSSSHVPKQAP), and 258-419 (SKIG…QLQQ). Residues 8 to 18 (VPTSSSSSAAT) are compositionally biased toward polar residues. Residues 20-32 (RQKDVDNKLEKCL) are compositionally biased toward basic and acidic residues. Composition is skewed to low complexity over residues 40 to 53 (TSSNNNSTSNSNNN), 137 to 158 (QHQQQQHHQQQQQQHQEQQQYP), and 183 to 203 (MQQQHMPAHQQQQHLPHKLQQ). Positions 271–282 (HSASFSSAQRPT) are enriched in polar residues. Low complexity-rich tracts occupy residues 285 to 310 (QFHQQHQQQQHLQQQQQHPQQQQHQH), 347 to 365 (QMQPVKYQQQQQHPHTQFQ), and 396 to 419 (SSSSNKQPQQPQQQQQQQQSQLQQ). Residues 479-799 (YKIMATLGEG…LGEALHHPFF (321 aa)) form the Protein kinase domain. ATP is bound by residues 485 to 493 (LGEGTFGRV) and K508. Catalysis depends on D605, which acts as the Proton acceptor. The tract at residues 809 to 832 (GEVSNKQPLSSGSSSRERSHSLSR) is disordered. The span at 823-832 (SRERSHSLSR) shows a compositional bias: basic and acidic residues.

This sequence belongs to the protein kinase superfamily. CMGC Ser/Thr protein kinase family. Lammer subfamily. Interacts (via N-terminus) with x16 (via Arg/Ser-rich region). Interacts with eEF1gamma (via C-terminus); the interaction is probably direct, is transient and leads to phosphorylation of eEF1gamma by Doa. Requires Mg(2+) as cofactor. Post-translationally, autophosphorylated on serine, threonine and tyrosine residues. As to expression, ubiquitous expression in embryos. Stage 17 embryos show elevated expression in CNS and brain. Ubiquitous expression in larval imaginal disks. Increased expression posterior to the eye-antennal disk morphogenetic furrow.

The protein resides in the cytoplasm. The protein localises to the cytosol. It localises to the nucleus. The catalysed reaction is L-seryl-[protein] + ATP = O-phospho-L-seryl-[protein] + ADP + H(+). It catalyses the reaction L-threonyl-[protein] + ATP = O-phospho-L-threonyl-[protein] + ADP + H(+). The enzyme catalyses L-tyrosyl-[protein] + ATP = O-phospho-L-tyrosyl-[protein] + ADP + H(+). Dual specificity kinase involved in the negative regulation of microtubule-based transport through phsophorylation of the microtuble-binding protein eEF1gamma. May function in the control of alternative splicing by phosphorylating serine/arginine-rich splicing factors, the SR proteins, including x16. Negative regulator of the copia retrotransposon element of the white (w) gene. In the eye, it is required for normal pigmentation, photoreceptor cell development and for organization of interommatidial bristles. Also essential for embryonic segmentation and differentiation of the nervous system. In terms of biological role, may be the specific isoform involved in regulation of microtubule-based transport through phosphorylation of the microtubule binding protein eEF1gamma. The protein is Serine/threonine-protein kinase Doa of Drosophila melanogaster (Fruit fly).